A 607-amino-acid polypeptide reads, in one-letter code: UvrABC system protein C (607 aa).

One can recognise a GIY-YIG domain in the interval 16–94; sequence GRPGVYRMFD…IKEWRPPYNI (79 aa). The UVR domain occupies 203 to 238; sequence QQLGNELNAEMEKAAMALDFEKAAELRDQIALLRRV.

The protein belongs to the UvrC family. Interacts with UvrB in an incision complex.

The protein localises to the cytoplasm. Functionally, the UvrABC repair system catalyzes the recognition and processing of DNA lesions. UvrC both incises the 5' and 3' sides of the lesion. The N-terminal half is responsible for the 3' incision and the C-terminal half is responsible for the 5' incision. In Pseudomonas putida (strain ATCC 700007 / DSM 6899 / JCM 31910 / BCRC 17059 / LMG 24140 / F1), this protein is UvrABC system protein C.